The following is a 612-amino-acid chain: GPI mannosyltransferase 3 (612 aa).

2 helical membrane passes run 92 to 112 and 145 to 165; these read LLAIASKEALSIICSIGAGLM and VIYAPKLFMALLAATGEYFTI. Residue asparagine 188 is glycosylated (N-linked (GlcNAc...) asparagine). 3 consecutive transmembrane segments (helical) span residues 192–212, 254–274, and 288–308; these read IALLLTLTNFFNCFFITRTFI, RPSNAIIWIVLGFFLTINLLL, and ILVVFTITMLVNVVIDFYFYN. N-linked (GlcNAc...) asparagine glycosylation is present at asparagine 321. A helical membrane pass occupies residues 339-359; that stretch reads LLQSLPIMLGYSLPLFIYGLF. N-linked (GlcNAc...) asparagine glycosylation occurs at asparagine 361. A run of 3 helical transmembrane segments spans residues 371 to 391, 398 to 418, and 429 to 449; these read FGALRQIKFVLILNIIFYSYL, FIYPLQPLFCLLSALGALKLA, and EYVWIIPLMSMIVSIFITTFQ. 3 N-linked (GlcNAc...) asparagine glycosylation sites follow: asparagine 508, asparagine 526, and asparagine 550.

It belongs to the glycosyltransferase 22 family. PIGB subfamily.

The protein localises to the endoplasmic reticulum membrane. Its pathway is glycolipid biosynthesis; glycosylphosphatidylinositol-anchor biosynthesis. In terms of biological role, mannosyltransferase involved in glycosylphosphatidylinositol-anchor biosynthesis. Transfers the third mannose to Man2-GlcN-acyl-PI during GPI precursor assembly. This is GPI mannosyltransferase 3 (GPI10) from Candida glabrata (strain ATCC 2001 / BCRC 20586 / JCM 3761 / NBRC 0622 / NRRL Y-65 / CBS 138) (Yeast).